The sequence spans 258 residues: Kallikrein-1 (258 aa).

The first 18 residues, M1–A18, serve as a signal peptide directing secretion. Positions P19–R24 are cleaved as a propeptide — activation peptide. Residues I25–A255 enclose the Peptidase S1 domain. Cystine bridges form between C31/C170, C47/C63, C149/C216, C181/C195, and C206/C231. H62 acts as the Charge relay system in catalysis. O-linked (GalNAc...) serine glycosylation occurs at S90. N99 carries N-linked (GlcNAc...) asparagine glycosylation. The O-linked (GalNAc...) serine glycan is linked to S101. Residue N105 is glycosylated (N-linked (GlcNAc...) asparagine). Catalysis depends on D117, which acts as the Charge relay system. The N-linked (GlcNAc...) asparagine glycan is linked to N161. The O-linked (GalNAc...) serine glycan is linked to S163. S210 functions as the Charge relay system in the catalytic mechanism.

The protein belongs to the peptidase S1 family. Kallikrein subfamily.

It carries out the reaction Preferential cleavage of Arg-|-Xaa bonds in small molecule substrates. Highly selective action to release kallidin (lysyl-bradykinin) from kininogen involves hydrolysis of Met-|-Xaa or Leu-|-Xaa.. Its function is as follows. Glandular kallikreins cleave Met-Lys and Arg-Ser bonds in kininogen to release Lys-bradykinin. This is Kallikrein-1 (KLK1) from Papio hamadryas (Hamadryas baboon).